A 359-amino-acid polypeptide reads, in one-letter code: Putative transposase y4uE (359 aa).

2 disordered regions span residues Met-1–Gly-31 and His-318–Ala-359.

The protein belongs to the transposase 9 family.

The chain is Putative transposase y4uE from Sinorhizobium fredii (strain NBRC 101917 / NGR234).